The following is a 254-amino-acid chain: Galactitol 2-dehydrogenase (L-tagatose-forming) (254 aa).

NAD(+)-binding positions include 21–23, Asp-42, 66–67, Tyr-159, Lys-163, and 192–194; these read SGI, DV, and VAT. The Proton acceptor role is filled by Tyr-159. Residue Trp-254 coordinates Mg(2+).

Belongs to the short-chain dehydrogenases/reductases (SDR) family. Homotetramer. A divalent metal cation serves as cofactor.

It catalyses the reaction galactitol + NAD(+) = keto-L-tagatose + NADH + H(+). Inhibited by the chelating agents EDTA and alpha,alpha'-dipyridyl. Inhibited by Zn(2+) and Fe(2+). Catalyzes the interconversion of galactitol to the rare sugar L-tagatose. Shows activity with a wide range of substrates, and catalyzes the oxidation of a variety of polyvalent aliphatic alcohols and polyols to the corresponding ketones and ketoses, respectively, and in the reverse reaction, it reduces ketones with high stereoselectivity yielding the corresponding S-configurated alcohols. Shows high activity with D-threitol, xylitol, 1,2-hexanediol, 1,2-pentanediol, 2-hexanol, L-erythrulose, D-ribulose and acetoin. Specific for NAD(+). The sequence is that of Galactitol 2-dehydrogenase (L-tagatose-forming) from Cereibacter sphaeroides (Rhodobacter sphaeroides).